A 229-amino-acid polypeptide reads, in one-letter code: 2-C-methyl-D-erythritol 4-phosphate cytidylyltransferase (229 aa).

The protein belongs to the IspD/TarI cytidylyltransferase family. IspD subfamily.

The catalysed reaction is 2-C-methyl-D-erythritol 4-phosphate + CTP + H(+) = 4-CDP-2-C-methyl-D-erythritol + diphosphate. It participates in isoprenoid biosynthesis; isopentenyl diphosphate biosynthesis via DXP pathway; isopentenyl diphosphate from 1-deoxy-D-xylulose 5-phosphate: step 2/6. Functionally, catalyzes the formation of 4-diphosphocytidyl-2-C-methyl-D-erythritol from CTP and 2-C-methyl-D-erythritol 4-phosphate (MEP). This chain is 2-C-methyl-D-erythritol 4-phosphate cytidylyltransferase, found in Clostridium botulinum (strain 657 / Type Ba4).